The primary structure comprises 375 residues: Peptide-N(4)-(N-acetyl-beta-glucosaminyl)asparagine amidase (375 aa).

4 residues coordinate Zn(2+): Cys-129, Cys-132, Cys-163, and Cys-166. Cys-189 acts as the Nucleophile in catalysis. Active-site residues include His-219 and Asp-236. A substrate-binding site is contributed by Glu-239. The interval 345 to 375 is disordered; that stretch reads KIEVSRTHNIPTGRQTGDAEWTKSRGEDGNE. A compositionally biased stretch (basic and acidic residues) spans 364-375; that stretch reads EWTKSRGEDGNE.

It belongs to the transglutaminase-like superfamily. PNGase family. Requires Zn(2+) as cofactor.

It localises to the cytoplasm. It carries out the reaction Hydrolysis of an N(4)-(acetyl-beta-D-glucosaminyl)asparagine residue in which the glucosamine residue may be further glycosylated, to yield a (substituted) N-acetyl-beta-D-glucosaminylamine and a peptide containing an aspartate residue.. In terms of biological role, specifically deglycosylates the denatured form of N-linked glycoproteins in the cytoplasm and assists their proteasome-mediated degradation. Cleaves the beta-aspartyl-glucosamine (GlcNAc) of the glycan and the amide side chain of Asn, converting Asn to Asp. Prefers proteins containing high-mannose over those bearing complex type oligosaccharides. Can recognize misfolded proteins in the endoplasmic reticulum that are exported to the cytosol to be destroyed and deglycosylate them, while it has no activity toward native proteins. Deglycosylation is a prerequisite for subsequent proteasome-mediated degradation of some, but not all, misfolded glycoproteins. The protein is Peptide-N(4)-(N-acetyl-beta-glucosaminyl)asparagine amidase (PNG1) of Debaryomyces hansenii (strain ATCC 36239 / CBS 767 / BCRC 21394 / JCM 1990 / NBRC 0083 / IGC 2968) (Yeast).